The primary structure comprises 165 residues: 16S rRNA aminocarboxypropyltransferase (165 aa).

S-adenosyl-L-methionine-binding residues include Thr17, Leu62, Leu83, and Thr102.

Belongs to the TDD superfamily. TSR3 family.

It localises to the cytoplasm. The enzyme catalyses an N(1)-methylpseudouridine in rRNA + S-adenosyl-L-methionine = N(1)-methyl-N(3)-[(3S)-3-amino-3-carboxypropyl]pseudouridine in rRNA + S-methyl-5'-thioadenosine + H(+). In terms of biological role, aminocarboxypropyltransferase that catalyzes the aminocarboxypropyl transfer on pseudouridine corresponding to position 914 in M.jannaschii 16S rRNA. It constitutes the last step in biosynthesis of the hypermodified N1-methyl-N3-(3-amino-3-carboxypropyl) pseudouridine (m1acp3-Psi). This is 16S rRNA aminocarboxypropyltransferase from Halobacterium salinarum (strain ATCC 700922 / JCM 11081 / NRC-1) (Halobacterium halobium).